The following is a 300-amino-acid chain: Probable low-salt glycan biosynthesis reductase Agl14 (300 aa).

Residues 10-12 (GLL), 46-47 (DI), and 70-72 (AYT) contribute to the NADH site. NADPH is bound by residues 11–12 (LL), 46–47 (DI), 70–72 (AYT), Tyr109, Tyr135, and Lys139. NADH contacts are provided by Tyr135 and Lys139. Tyr135 serves as the catalytic Proton donor/acceptor.

Belongs to the dTDP-4-dehydrorhamnose reductase family.

Its pathway is protein modification; protein glycosylation. The protein operates within cell surface structure biogenesis; S-layer biogenesis. Its function is as follows. Reductase involved in N-glycan biosynthetic pathway that takes place under low-salt conditions (1.75 M instead of 3.4 M). Participates in the formation of the tetrasaccharide present at 'Asn-532' of S-layer glycoprotein Csg, consisting of a sulfated hexose, 2 hexoses and rhamnose. Involved in the addition of final rhamnose (sugar 4) of the tetrasaccharide on the dolichol phosphate carrier. The chain is Probable low-salt glycan biosynthesis reductase Agl14 (agl14) from Haloferax volcanii (strain ATCC 29605 / DSM 3757 / JCM 8879 / NBRC 14742 / NCIMB 2012 / VKM B-1768 / DS2) (Halobacterium volcanii).